The following is a 40-amino-acid chain: Photosystem II reaction center protein J (40 aa).

The helical transmembrane segment at 8–28 (IPLWIIGTVAGIVVIGLIGLF) threads the bilayer.

The protein belongs to the PsbJ family. In terms of assembly, PSII is composed of 1 copy each of membrane proteins PsbA, PsbB, PsbC, PsbD, PsbE, PsbF, PsbH, PsbI, PsbJ, PsbK, PsbL, PsbM, PsbT, PsbX, PsbY, PsbZ, Psb30/Ycf12, at least 3 peripheral proteins of the oxygen-evolving complex and a large number of cofactors. It forms dimeric complexes.

The protein localises to the plastid. The protein resides in the chloroplast thylakoid membrane. In terms of biological role, one of the components of the core complex of photosystem II (PSII). PSII is a light-driven water:plastoquinone oxidoreductase that uses light energy to abstract electrons from H(2)O, generating O(2) and a proton gradient subsequently used for ATP formation. It consists of a core antenna complex that captures photons, and an electron transfer chain that converts photonic excitation into a charge separation. In Pisum sativum (Garden pea), this protein is Photosystem II reaction center protein J.